Reading from the N-terminus, the 467-residue chain is ATP-dependent protease ATPase subunit HslU (467 aa).

ATP contacts are provided by residues Val-20, 62-67 (GVGKTE), Asp-280, Glu-345, and Arg-417.

Belongs to the ClpX chaperone family. HslU subfamily. In terms of assembly, a double ring-shaped homohexamer of HslV is capped on each side by a ring-shaped HslU homohexamer. The assembly of the HslU/HslV complex is dependent on binding of ATP.

The protein localises to the cytoplasm. In terms of biological role, ATPase subunit of a proteasome-like degradation complex; this subunit has chaperone activity. The binding of ATP and its subsequent hydrolysis by HslU are essential for unfolding of protein substrates subsequently hydrolyzed by HslV. HslU recognizes the N-terminal part of its protein substrates and unfolds these before they are guided to HslV for hydrolysis. The polypeptide is ATP-dependent protease ATPase subunit HslU (Enterococcus faecalis (strain ATCC 700802 / V583)).